The sequence spans 585 residues: ATP-dependent lipid A-core flippase (585 aa).

Transmembrane regions (helical) follow at residues 24 to 44, 65 to 85, 143 to 163, 165 to 185, and 253 to 273; these read LWKV…ASAA, LLVP…SFCG, ITVV…MIYV, WKLT…IGYV, and PIIQ…ALSP. The ABC transmembrane type-1 domain maps to 29–310; the sequence is ALAVLGNVIY…LTEVNAVIQR (282 aa). The 237-residue stretch at 342 to 578 folds into the ABC transporter domain; that stretch reads LEFKSLGFAY…DGAYAALHKL (237 aa). 376–383 is an ATP binding site; sequence GRSGSGKS.

The protein belongs to the ABC transporter superfamily. Lipid exporter (TC 3.A.1.106) family. In terms of assembly, homodimer.

The protein localises to the cell inner membrane. The catalysed reaction is ATP + H2O + lipid A-core oligosaccharideSide 1 = ADP + phosphate + lipid A-core oligosaccharideSide 2.. Functionally, involved in lipopolysaccharide (LPS) biosynthesis. Translocates lipid A-core from the inner to the outer leaflet of the inner membrane. Transmembrane domains (TMD) form a pore in the inner membrane and the ATP-binding domain (NBD) is responsible for energy generation. This chain is ATP-dependent lipid A-core flippase, found in Hahella chejuensis (strain KCTC 2396).